Consider the following 418-residue polypeptide: Serine hydroxymethyltransferase (418 aa).

(6S)-5,6,7,8-tetrahydrofolate is bound by residues Leu121 and 125-127; that span reads GHL. Residue Lys230 is modified to N6-(pyridoxal phosphate)lysine. 356 to 358 is a binding site for (6S)-5,6,7,8-tetrahydrofolate; that stretch reads SPF.

It belongs to the SHMT family. Homodimer. Requires pyridoxal 5'-phosphate as cofactor.

The protein localises to the cytoplasm. It catalyses the reaction (6R)-5,10-methylene-5,6,7,8-tetrahydrofolate + glycine + H2O = (6S)-5,6,7,8-tetrahydrofolate + L-serine. It participates in one-carbon metabolism; tetrahydrofolate interconversion. It functions in the pathway amino-acid biosynthesis; glycine biosynthesis; glycine from L-serine: step 1/1. Its function is as follows. Catalyzes the reversible interconversion of serine and glycine with tetrahydrofolate (THF) serving as the one-carbon carrier. This reaction serves as the major source of one-carbon groups required for the biosynthesis of purines, thymidylate, methionine, and other important biomolecules. Also exhibits THF-independent aldolase activity toward beta-hydroxyamino acids, producing glycine and aldehydes, via a retro-aldol mechanism. The chain is Serine hydroxymethyltransferase from Shewanella woodyi (strain ATCC 51908 / MS32).